A 78-amino-acid polypeptide reads, in one-letter code: Leukemia-associated protein 1 (78 aa).

In terms of biological role, may act as a tumor suppressor. The protein is Leukemia-associated protein 1 (DLEU1) of Homo sapiens (Human).